Here is a 71-residue protein sequence, read N- to C-terminus: MPYYRRRVSPIKPGDPIDYKDVDLLRRFITERGKILPRRITGLTARQQRDLTRAIKQARVLALLPFINREG.

This sequence belongs to the bacterial ribosomal protein bS18 family. As to quaternary structure, part of the 30S ribosomal subunit. Forms a tight heterodimer with protein bS6.

In terms of biological role, binds as a heterodimer with protein bS6 to the central domain of the 16S rRNA, where it helps stabilize the platform of the 30S subunit. The chain is Small ribosomal subunit protein bS18 from Acaryochloris marina (strain MBIC 11017).